Consider the following 257-residue polypeptide: Expansin-A10 (257 aa).

Positions 1–18 (MAPCLLLVLFLLPALATG) are cleaved as a signal peptide. The Expansin-like EG45 domain occupies 50–163 (GGACGFGDLG…RRVNCLRDGG (114 aa)). Positions 173 to 252 (FFLTVLISNV…EWDFGKTYTG (80 aa)) constitute an Expansin-like CBD domain.

This sequence belongs to the expansin family. Expansin A subfamily. Expressed in panicles and flowers.

The protein resides in the secreted. The protein localises to the cell wall. It is found in the membrane. Its function is as follows. May cause loosening and extension of plant cell walls by disrupting non-covalent bonding between cellulose microfibrils and matrix glucans. No enzymatic activity has been found. May be required for rapid internodal elongation in deepwater rice during submergence. The sequence is that of Expansin-A10 (EXPA10) from Oryza sativa subsp. japonica (Rice).